Consider the following 210-residue polypeptide: Small ribosomal subunit protein uS3 (210 aa).

The KH type-2 domain maps to 38–106; that stretch reads LKSFLKKRLY…EVYLNIQEVR (69 aa).

Belongs to the universal ribosomal protein uS3 family. In terms of assembly, part of the 30S ribosomal subunit. Forms a tight complex with proteins S10 and S14.

Binds the lower part of the 30S subunit head. Binds mRNA in the 70S ribosome, positioning it for translation. The chain is Small ribosomal subunit protein uS3 from Geotalea daltonii (strain DSM 22248 / JCM 15807 / FRC-32) (Geobacter daltonii).